Reading from the N-terminus, the 156-residue chain is Neuroactive polyprotein R15 (156 aa).

The first 26 residues, 1 to 26 (MDSAGLHINFRLSHVLTVVTCILYIL), serve as a signal peptide directing secretion. Positions 27–48 (PPTTTAYSLPAPGKAAFQHQLS) are excised as a propeptide. Cysteines 74 and 81 form a disulfide. Pyrrolidone carboxylic acid is present on Gln-120.

In terms of tissue distribution, expressed within the abdominal ganglion in neurons R15, RB(HE), the two L9(G) gill motoneurons, and L40 interneuron, all are parts of autonomic control circuit that contributes to implementing a central command to coordinate autonomic activity with escape locomotion.

It localises to the secreted. The alpha-1 peptide acts as an osmoregulatory peptide, increasing blood volume, and also modulates the activity of a set of cardiac motor neurons that control heart rate. This is Neuroactive polyprotein R15 from Aplysia californica (California sea hare).